The primary structure comprises 643 residues: uncharacterized protein (643 aa).

A helical membrane pass occupies residues 9 to 29 (IVLALLLLLLPVVCGDVSVYK).

It localises to the membrane. This is an uncharacterized protein from Methanocaldococcus jannaschii (strain ATCC 43067 / DSM 2661 / JAL-1 / JCM 10045 / NBRC 100440) (Methanococcus jannaschii).